We begin with the raw amino-acid sequence, 101 residues long: Small ribosomal subunit protein bS18c (101 aa).

Residues 1-19 show a composition bias toward basic residues; the sequence is MNKSKRPFTKSKRSFRRRL. The disordered stretch occupies residues 1-20; that stretch reads MNKSKRPFTKSKRSFRRRLP.

This sequence belongs to the bacterial ribosomal protein bS18 family. Part of the 30S ribosomal subunit.

Its subcellular location is the plastid. It is found in the chloroplast. In Arabis hirsuta (Hairy rock-cress), this protein is Small ribosomal subunit protein bS18c.